The primary structure comprises 141 residues: Heavy metal-associated isoprenylated plant protein 29 (141 aa).

One can recognise an HMA domain in the interval 1–59 (MEVPMDCPGCENKVRKALEKMNGVHDVQIDIKQQRVTVTGSAEQKKVLKVARNVTKRDI). 2 residues coordinate a metal cation: Cys-7 and Cys-10. Residue Cys-138 is modified to Cysteine methyl ester. The S-farnesyl cysteine moiety is linked to residue Cys-138. Positions 139 to 141 (SIM) are cleaved as a propeptide — removed in mature form.

Belongs to the HIPP family.

Its function is as follows. Heavy-metal-binding protein. The protein is Heavy metal-associated isoprenylated plant protein 29 of Arabidopsis thaliana (Mouse-ear cress).